The chain runs to 1267 residues: Probable cation-transporting ATPase catp-6 (1267 aa).

Residues 1-32 (MVEAGGARRHRMTLESGDHTLTLFAYRTGPFR) lie on the Extracellular side of the membrane. The helical transmembrane segment at 33 to 53 (TILFYALTVLTLGIFRLILHW) threads the bilayer. Residues 54-189 (KQKWDVKMRM…RNEIVVQLRP (136 aa)) are Cytoplasmic-facing. The helical transmembrane segment at 190-210 (ILYLLVMEVITPFYVFQIFSV) threads the bilayer. At 211–217 (TVWYNDE) the chain is on the extracellular side. The chain crosses the membrane as a helical span at residues 218–238 (YAYYASLIVILSLGSIVMDVY). Over 239–390 (QIRTQEIRLR…DFRFTKDLFK (152 aa)) the chain is Cytoplasmic. A helical membrane pass occupies residues 391–411 (FILFLACISGCGFIYTIIVMI). Topologically, residues 412-424 (MRGNTLRRIIVRS) are extracellular. The chain crosses the membrane as a helical span at residues 425–445 (LDIITITVPPALPAAMSVGII). At 446-950 (NAQLRLKKKE…VTSFGIFKYM (505 aa)) the chain is on the cytoplasmic side. Residue Asp476 is the 4-aspartylphosphate intermediate of the active site. Positions 891 and 895 each coordinate Mg(2+). Residues 951 to 971 (AGYSLTQFVTVMHLYWISNIL) traverse the membrane as a helical segment. At 972–976 (TDGQF) the chain is on the extracellular side. The chain crosses the membrane as a helical span at residues 977–997 (MYIDMFLITMFALLFGNTPAF). Residues 998-1013 (YRLAHTPPPTRLLSIA) lie on the Cytoplasmic side of the membrane. Residues 1014 to 1034 (SMTSVVGQLIIIGVVQFIVFF) traverse the membrane as a helical segment. Topologically, residues 1035–1058 (STSQQPWFTPYQPPVDDEVEDKRS) are extracellular. A helical transmembrane segment spans residues 1059 to 1079 (MQGTALFCVSMFQYIILALVY). The Cytoplasmic segment spans residues 1080-1097 (SKGPPFRGNLWSNKPMCA). Residues 1098–1118 (LTIFATLLCLFIVIWPTELVL) traverse the membrane as a helical segment. Topologically, residues 1119 to 1132 (KTLGNVELPSLTFR) are extracellular. Residues 1133-1153 (IFIVIVGAVNAAVSYGFETLF) form a helical membrane-spanning segment. The Cytoplasmic segment spans residues 1154 to 1267 (VDFFLLGYWE…EEPEKLERTY (114 aa)). A disordered region spans residues 1232-1256 (ERLISRIGGEPTWLTNPIPPHSLSE).

This sequence belongs to the cation transport ATPase (P-type) (TC 3.A.3) family. Type V subfamily.

The protein resides in the membrane. The catalysed reaction is ATP + H2O = ADP + phosphate + H(+). The protein is Probable cation-transporting ATPase catp-6 of Caenorhabditis elegans.